A 141-amino-acid polypeptide reads, in one-letter code: Large ribosomal subunit protein uL11 (141 aa).

This sequence belongs to the universal ribosomal protein uL11 family. Part of the ribosomal stalk of the 50S ribosomal subunit. Interacts with L10 and the large rRNA to form the base of the stalk. L10 forms an elongated spine to which L12 dimers bind in a sequential fashion forming a multimeric L10(L12)X complex. Post-translationally, one or more lysine residues are methylated.

Forms part of the ribosomal stalk which helps the ribosome interact with GTP-bound translation factors. This is Large ribosomal subunit protein uL11 from Chloroflexus aurantiacus (strain ATCC 29366 / DSM 635 / J-10-fl).